Here is an 86-residue protein sequence, read N- to C-terminus: Putative defensin-like protein 211 (86 aa).

The first 19 residues, 1 to 19 (MNTIVLFLTLLILVSSCTS), serve as a signal peptide directing secretion. 3 disulfides stabilise this stretch: Cys-55–Cys-72, Cys-58–Cys-77, and Cys-62–Cys-79.

This sequence belongs to the DEFL family.

It localises to the secreted. The chain is Putative defensin-like protein 211 from Arabidopsis thaliana (Mouse-ear cress).